A 562-amino-acid polypeptide reads, in one-letter code: Tetratricopeptide repeat protein 34 (562 aa).

The disordered stretch occupies residues 1–30 (MLHKKPQRANENGISQRKKPSDQDNSSVKE). Positions 19–30 (KPSDQDNSSVKE) are enriched in basic and acidic residues. 8 TPR repeats span residues 51 to 84 (DVSR…SSQR), 175 to 208 (KDSL…EPYN), 210 to 242 (EALS…DASY), 304 to 337 (AHFH…NAID), 388 to 421 (FQAA…SNNN), 423 to 455 (KYLR…HSSH), 461 to 494 (AEDY…EHAS), and 509 to 542 (AGIF…DENN).

This is Tetratricopeptide repeat protein 34 (ttc34) from Xenopus laevis (African clawed frog).